Here is a 232-residue protein sequence, read N- to C-terminus: Zinc-finger homeodomain protein 5 (232 aa).

Positions M1 to G11 are enriched in acidic residues. Residues M1–H25 are disordered. The ZF-HD dimerization-type; degenerate zinc finger occupies Y40 to D86. A disordered region spans residues G126 to Q170. The homeobox DNA-binding region spans R159–Q222.

Homo- and heterodimer with other ZFHD proteins.

It is found in the nucleus. In terms of biological role, putative transcription factor. The chain is Zinc-finger homeodomain protein 5 (ZHD5) from Oryza sativa subsp. indica (Rice).